The following is a 465-amino-acid chain: Cysteine--tRNA ligase (465 aa).

A Zn(2+)-binding site is contributed by Cys30. Positions 32–42 (ITVYDYCHVGH) match the 'HIGH' region motif. Positions 214, 239, and 243 each coordinate Zn(2+). The 'KMSKS' region motif lies at 271–275 (KMSKS). Residue Lys274 participates in ATP binding.

It belongs to the class-I aminoacyl-tRNA synthetase family. As to quaternary structure, monomer. Zn(2+) serves as cofactor.

The protein resides in the cytoplasm. The catalysed reaction is tRNA(Cys) + L-cysteine + ATP = L-cysteinyl-tRNA(Cys) + AMP + diphosphate. This Burkholderia ambifaria (strain ATCC BAA-244 / DSM 16087 / CCUG 44356 / LMG 19182 / AMMD) (Burkholderia cepacia (strain AMMD)) protein is Cysteine--tRNA ligase.